The following is a 120-amino-acid chain: cAMP-responsive element-binding protein-like 2 (120 aa).

A disordered region spans residues 1–24 (MDDSKVVGGKVKKPGKRGRKPAKI). Residues 10-21 (KVKKPGKRGRKP) show a composition bias toward basic residues. In terms of domain architecture, bZIP spans 23-86 (KIDLKAKLER…MAMDQGKIPS (64 aa)). The basic motif stretch occupies residues 29–60 (KLERSRQSARECRARKKLRYQYLEELVSSRER). The interval 62 to 69 (ICALREEL) is leucine-zipper. The segment at 93-120 (TGEEQNKSQQNSSRHTKAGKTDANSNSW) is disordered.

This sequence belongs to the bZIP family. ATF subfamily. In terms of assembly, interacts with CREB1; regulates CREB1 phosphorylation, stability and transcriptional activity. Phosphorylated by AMPK.

The protein resides in the nucleus. In terms of biological role, probable regulator of CREB1 transcriptional activity which is involved in adipose cells differentiation. May also play a regulatory role in the cell cycle. Identification in a chromosomal region frequently deleted in various cancers suggests that it might act as a tumor suppressor. The sequence is that of cAMP-responsive element-binding protein-like 2 (CREBL2) from Homo sapiens (Human).